Here is a 309-residue protein sequence, read N- to C-terminus: Mitochondrial fission regulator 1-like (309 aa).

The disordered stretch occupies residues 189 to 221 (DVTEEDEEEEEEEDREEEEEDVSELVPDPMPPV). A compositionally biased stretch (acidic residues) spans 190-211 (VTEEDEEEEEEEDREEEEEDVS). Ser253 carries the phosphoserine modification.

The protein belongs to the MTFR1 family.

The protein localises to the mitochondrion outer membrane. Its function is as follows. Mitochondrial protein required for adaptation of miochondrial dynamics to metabolic changes. Regulates mitochondrial morphology at steady state and mediates AMPK-dependent stress-induced mitochondrial fragmentation via the control of OPA1 levels. The protein is Mitochondrial fission regulator 1-like (mtfr1l) of Danio rerio (Zebrafish).